The following is a 508-amino-acid chain: Arabinose import ATP-binding protein AraG (508 aa).

2 ABC transporter domains span residues 5–240 (LEFQ…MVGR) and 250–496 (ARTL…LPDA). Position 37 to 44 (37 to 44 (GENGAGKS)) interacts with ATP.

Belongs to the ABC transporter superfamily. Arabinose importer (TC 3.A.1.2.2) family. As to quaternary structure, the complex is composed of two ATP-binding proteins (AraG), two transmembrane proteins (AraH) and a solute-binding protein (AraF).

Its subcellular location is the cell inner membrane. It catalyses the reaction L-arabinose(out) + ATP + H2O = L-arabinose(in) + ADP + phosphate + H(+). In terms of biological role, part of the ABC transporter complex AraFGH involved in arabinose import. Responsible for energy coupling to the transport system. The sequence is that of Arabinose import ATP-binding protein AraG from Rhizobium meliloti (strain 1021) (Ensifer meliloti).